The primary structure comprises 631 residues: tRNA uridine 5-carboxymethylaminomethyl modification enzyme MnmG (631 aa).

13–18 lines the FAD pocket; sequence GGGHAG. An NAD(+)-binding site is contributed by 273–287; that stretch reads GPRYCPSIEDKVNRF.

This sequence belongs to the MnmG family. As to quaternary structure, homodimer. Heterotetramer of two MnmE and two MnmG subunits. Requires FAD as cofactor.

Its subcellular location is the cytoplasm. In terms of biological role, NAD-binding protein involved in the addition of a carboxymethylaminomethyl (cmnm) group at the wobble position (U34) of certain tRNAs, forming tRNA-cmnm(5)s(2)U34. In Chromohalobacter salexigens (strain ATCC BAA-138 / DSM 3043 / CIP 106854 / NCIMB 13768 / 1H11), this protein is tRNA uridine 5-carboxymethylaminomethyl modification enzyme MnmG.